The following is a 369-amino-acid chain: Anhydro-N-acetylmuramic acid kinase (369 aa).

12-19 (GTSMDGVD) provides a ligand contact to ATP.

It belongs to the anhydro-N-acetylmuramic acid kinase family.

It carries out the reaction 1,6-anhydro-N-acetyl-beta-muramate + ATP + H2O = N-acetyl-D-muramate 6-phosphate + ADP + H(+). Its pathway is amino-sugar metabolism; 1,6-anhydro-N-acetylmuramate degradation. The protein operates within cell wall biogenesis; peptidoglycan recycling. In terms of biological role, catalyzes the specific phosphorylation of 1,6-anhydro-N-acetylmuramic acid (anhMurNAc) with the simultaneous cleavage of the 1,6-anhydro ring, generating MurNAc-6-P. Is required for the utilization of anhMurNAc either imported from the medium or derived from its own cell wall murein, and thus plays a role in cell wall recycling. This is Anhydro-N-acetylmuramic acid kinase from Shewanella putrefaciens (strain CN-32 / ATCC BAA-453).